The following is a 284-amino-acid chain: Hemin import ATP-binding protein HmuV (284 aa).

Positions 33–266 constitute an ABC transporter domain; it reads LGARHLSKSY…KLLSDVYSYE (234 aa). 65–72 serves as a coordination point for ATP; the sequence is GPNGAGKS.

The protein belongs to the ABC transporter superfamily. Heme (hemin) importer (TC 3.A.1.14.5) family. In terms of assembly, the complex is composed of two ATP-binding proteins (HmuV), two transmembrane proteins (HmuU) and a solute-binding protein (HmuT).

The protein resides in the cell membrane. Its function is as follows. Part of the ABC transporter complex HmuTUV involved in hemin import. Responsible for energy coupling to the transport system. The chain is Hemin import ATP-binding protein HmuV from Thermobifida fusca (strain YX).